We begin with the raw amino-acid sequence, 523 residues long: MVAALERGLSASKSFNFKRMFDSSSTKQQQSQTIVVENGDSHIVESNTPESQNSDSFVESPVESSLPMISPLTRPGKRSERQQADMEMMKDRFAKLLLGEDMSGGGKGVSSALALSNAITNLAASIFGEQTKLQPMPQDRQARWKKEIDWLLSVTDHIVEFVPSQQTSKDGVCTEIMVTRQRGDLLMNIPALRKLDAMLIDTLDNFRGHNEFWYVSRDSEEGQQARNDRTNDKWWLPPVKVPPGGLSEPSRRMLYFQKDSVTQVQKAAMAINAQVLSEMEIPESYIDSLPKNGRASLGDSIYKSITEEWFDPEQFLAMLDMSTEHKVLDLKNRIEASVVIWKRKLHTKDTKSSWGSAVSLEKRELFEERAETILVLLKQKFPGLPQSSLDISKIQFNKDVGQAVLESYSRILESLAYTVMSRIEDVLYTDTLALKQTLLAEETSDGGRTTETDSESAGSSNSGEEAEKHDPHSKTLLDFMGWNDNSSKGGDKPTKSPNLTPKKLSYLEKLENLNGFRSPKDRH.

Positions V44 to F57 are enriched in polar residues. Disordered stretches follow at residues V44–Q83 and E442–H523. A PRONE domain is found at G76–A440. Over residues E465–T475 the composition is skewed to basic and acidic residues.

In terms of assembly, homodimer. The homodimer interacts with ARAC5/ROP4. Interacts with ARAC11/ROP1 and ARAC10/ROP11. Interacts with PRK6. Expressed in pollen grains and pollen tubes.

Its subcellular location is the cell membrane. Its function is as follows. Guanine-nucleotide exchange factor (GEF) that acts as an activator of Rop (Rho of plants) GTPases by promoting the exchange of GDP for GTP. Active as homodimer. This chain is Rho guanine nucleotide exchange factor 8, found in Arabidopsis thaliana (Mouse-ear cress).